The primary structure comprises 91 residues: Putative defensin-like protein 145 (91 aa).

The signal sequence occupies residues 1–26 (MNKNIIFSFTVLTLFVIFVQVTGVIG). N-linked (GlcNAc...) asparagine glycosylation is found at Asn-35 and Asn-68. 4 cysteine pairs are disulfide-bonded: Cys-39/Cys-84, Cys-52/Cys-74, Cys-57/Cys-78, and Cys-61/Cys-80.

Belongs to the DEFL family.

The protein resides in the secreted. This Arabidopsis thaliana (Mouse-ear cress) protein is Putative defensin-like protein 145 (LCR2).